The primary structure comprises 278 residues: Energy-coupling factor transporter ATP-binding protein EcfA (278 aa).

The region spanning 4-239 (LETRDLKYSY…SETVRSANLR (236 aa)) is the ABC transporter domain. 37–44 (GPNGAGKS) lines the ATP pocket.

The protein belongs to the ABC transporter superfamily. Energy-coupling factor EcfA family. In terms of assembly, forms a stable energy-coupling factor (ECF) transporter complex composed of 2 membrane-embedded substrate-binding proteins (S component), 2 ATP-binding proteins (A component) and 2 transmembrane proteins (T component).

The protein resides in the cell membrane. ATP-binding (A) component of a common energy-coupling factor (ECF) ABC-transporter complex. Unlike classic ABC transporters this ECF transporter provides the energy necessary to transport a number of different substrates. The chain is Energy-coupling factor transporter ATP-binding protein EcfA from Methanococcus maripaludis (strain DSM 14266 / JCM 13030 / NBRC 101832 / S2 / LL).